A 443-amino-acid polypeptide reads, in one-letter code: Chromosome partition protein MukF (443 aa).

Positions 209–237 (LDETSGNLRELQDTLNAAGDKLQAQLLRI) are leucine-zipper.

Belongs to the MukF family. As to quaternary structure, interacts, and probably forms a ternary complex, with MukE and MukB via its C-terminal region. The complex formation is stimulated by calcium or magnesium. It is required for an interaction between MukE and MukB.

It localises to the cytoplasm. It is found in the nucleoid. In terms of biological role, involved in chromosome condensation, segregation and cell cycle progression. May participate in facilitating chromosome segregation by condensation DNA from both sides of a centrally located replisome during cell division. Not required for mini-F plasmid partitioning. Probably acts via its interaction with MukB and MukE. Overexpression results in anucleate cells. It has a calcium binding activity. In Actinobacillus pleuropneumoniae serotype 7 (strain AP76), this protein is Chromosome partition protein MukF.